Consider the following 513-residue polypeptide: tRNA-2-methylthio-N(6)-dimethylallyladenosine synthase (513 aa).

Residues 67–185 form the MTTase N-terminal domain; the sequence is KTFLIKTYGC…LPEILEEAYL (119 aa). [4Fe-4S] cluster-binding residues include Cys-76, Cys-112, Cys-146, Cys-222, Cys-226, and Cys-229. The Radical SAM core domain maps to 208-438; the sequence is REGNIKAWVN…NKKVACYSER (231 aa). Residues 441 to 504 form the TRAM domain; the sequence is QQYEGQTVQV…QFSLNGTFIS (64 aa).

This sequence belongs to the methylthiotransferase family. MiaB subfamily. In terms of assembly, monomer. Requires [4Fe-4S] cluster as cofactor.

The protein localises to the cytoplasm. The enzyme catalyses N(6)-dimethylallyladenosine(37) in tRNA + (sulfur carrier)-SH + AH2 + 2 S-adenosyl-L-methionine = 2-methylsulfanyl-N(6)-dimethylallyladenosine(37) in tRNA + (sulfur carrier)-H + 5'-deoxyadenosine + L-methionine + A + S-adenosyl-L-homocysteine + 2 H(+). Its function is as follows. Catalyzes the methylthiolation of N6-(dimethylallyl)adenosine (i(6)A), leading to the formation of 2-methylthio-N6-(dimethylallyl)adenosine (ms(2)i(6)A) at position 37 in tRNAs that read codons beginning with uridine. This Staphylococcus saprophyticus subsp. saprophyticus (strain ATCC 15305 / DSM 20229 / NCIMB 8711 / NCTC 7292 / S-41) protein is tRNA-2-methylthio-N(6)-dimethylallyladenosine synthase.